The sequence spans 224 residues: DNA mismatch repair protein MutH (224 aa).

The protein belongs to the MutH family.

It is found in the cytoplasm. Sequence-specific endonuclease that cleaves unmethylated GATC sequences. It is involved in DNA mismatch repair. The protein is DNA mismatch repair protein MutH of Shewanella amazonensis (strain ATCC BAA-1098 / SB2B).